The chain runs to 933 residues: uncharacterized protein (933 aa).

Positions 244–255 (KKDIGAKPKPVD) are enriched in basic and acidic residues. Disordered regions lie at residues 244-277 (KKDIGAKPKPVDDVSPQPVRARTPPENTVVELPD) and 343-364 (SAPHQPSSQHAQMGRHSQEWKG). Residues 343–353 (SAPHQPSSQHA) are compositionally biased toward polar residues. A helical membrane pass occupies residues 771 to 791 (VIHGMVLMFAGGKLLFGGCVL). Residues 890-907 (DKIEKEPPPSPEKVKPPE) are compositionally biased toward basic and acidic residues. Residues 890 to 933 (DKIEKEPPPSPEKVKPPEIELQPFTKMRRSSKKTAGFKKLNSKK) form a disordered region. Positions 915-933 (KMRRSSKKTAGFKKLNSKK) are enriched in basic residues.

It is found in the membrane. This is an uncharacterized protein from Mus musculus (Mouse).